The sequence spans 227 residues: MAKSIYLIGGSKGGVGKSLVTMATVDYLQERGESVLLIESDTSNPDVWKAYKESTETELINLDEADGWIQLVNLCDSKPDSVVVINAAARNNKGVSAYGETLNSTLAELKRKLVTLWVINRQRDSLELLKEYMDAIPNADVHVVRNGHFGEEKKFELYNGSKLRTAVEERGGQSVTFPDMADRVSDDIYSKRMSISVALKELPIGNRAELTRWRNEAKKVLEGVIHE.

The chain is Protein MobD (mobD) from Acidithiobacillus ferrooxidans (Thiobacillus ferrooxidans).